We begin with the raw amino-acid sequence, 161 residues long: Phage-like element PBSX protein XkdI (161 aa).

The protein to B.subtilis YqbI.

This is Phage-like element PBSX protein XkdI (xkdI) from Bacillus subtilis (strain 168).